The chain runs to 395 residues: 8-amino-7-oxononanoate synthase (395 aa).

Position 108–109 (108–109 (GF)) interacts with pyridoxal 5'-phosphate. Histidine 134 contributes to the substrate binding site. Residues serine 184, 209-212 (DDAH), and 240-243 (TLSK) contribute to the pyridoxal 5'-phosphate site. Lysine 243 carries the post-translational modification N6-(pyridoxal phosphate)lysine. Threonine 357 lines the substrate pocket.

It belongs to the class-II pyridoxal-phosphate-dependent aminotransferase family. BioF subfamily. In terms of assembly, homodimer. Pyridoxal 5'-phosphate serves as cofactor.

It carries out the reaction 6-carboxyhexanoyl-[ACP] + L-alanine + H(+) = (8S)-8-amino-7-oxononanoate + holo-[ACP] + CO2. Its pathway is cofactor biosynthesis; biotin biosynthesis. Its function is as follows. Catalyzes the decarboxylative condensation of pimeloyl-[acyl-carrier protein] and L-alanine to produce 8-amino-7-oxononanoate (AON), [acyl-carrier protein], and carbon dioxide. The protein is 8-amino-7-oxononanoate synthase of Fervidobacterium nodosum (strain ATCC 35602 / DSM 5306 / Rt17-B1).